Reading from the N-terminus, the 481-residue chain is Proline--tRNA ligase (481 aa).

The protein belongs to the class-II aminoacyl-tRNA synthetase family. ProS type 3 subfamily. In terms of assembly, homodimer.

It is found in the cytoplasm. It catalyses the reaction tRNA(Pro) + L-proline + ATP = L-prolyl-tRNA(Pro) + AMP + diphosphate. Functionally, catalyzes the attachment of proline to tRNA(Pro) in a two-step reaction: proline is first activated by ATP to form Pro-AMP and then transferred to the acceptor end of tRNA(Pro). The protein is Proline--tRNA ligase of Chlorobium luteolum (strain DSM 273 / BCRC 81028 / 2530) (Pelodictyon luteolum).